We begin with the raw amino-acid sequence, 230 residues long: Cytochrome b6-f complex iron-sulfur subunit, chloroplastic (230 aa).

The transit peptide at 1 to 50 (MSSTTLSPTTPSQLCSGKSGISCPSIALLVKPTRTQMTGRGNKGMKITCQ) directs the protein to the chloroplast. Residues 72-92 (LLGALSLPTAGMLVPYGSFLV) form a helical membrane-spanning segment. A Rieske domain is found at 115–213 (ATEWLKTHAP…VGVEDGKVVF (99 aa)). [2Fe-2S] cluster contacts are provided by C157, H159, C175, and H178. C162 and C177 are disulfide-bonded.

This sequence belongs to the Rieske iron-sulfur protein family. As to quaternary structure, the 4 large subunits of the cytochrome b6-f complex are cytochrome b6, subunit IV (17 kDa polypeptide, petD), cytochrome f and the Rieske protein, while the 4 small subunits are petG, petL, petM and petN. The complex functions as a dimer. [2Fe-2S] cluster serves as cofactor.

It is found in the plastid. The protein resides in the chloroplast thylakoid membrane. The catalysed reaction is 2 oxidized [plastocyanin] + a plastoquinol + 2 H(+)(in) = 2 reduced [plastocyanin] + a plastoquinone + 4 H(+)(out). In terms of biological role, component of the cytochrome b6-f complex, which mediates electron transfer between photosystem II (PSII) and photosystem I (PSI), cyclic electron flow around PSI, and state transitions. The chain is Cytochrome b6-f complex iron-sulfur subunit, chloroplastic (petC) from Pisum sativum (Garden pea).